The following is a 1511-amino-acid chain: MAALCLTVNAGDPPLDALLAVEHVKGDVSVSVEEGKENLLRVSEDVVFTDINSILRYLARVATTSGLYGTNLMEHTEIDHWLEFSATKLSSCAALTSALTELNHCLSLRTYLVGNSLTLADLCVWATLKGNAAWQEQLEQNKTLVHVKRWFGFLEAQQAFRSVGTKWDVSENKARVVPDKKQDVGKFVELPGAEMGKVTVRFPPEASGYLHIGHAKAALLNQHYQVNFKGKLIMRFDDTNPEKEKEDFEKVILEDVAMLHIKPDQFTYTSDHFETIMKYAEKLIQEGKAYVDDTPAEQMKAEREQRAESKHRQNSVEKNLQMWEEMKKGSPFGQSCCLRAKIDMSSNNGCMRDPTLYRCKIQPHPRTGNKYNVYPTYDFACPIVDSIEGVTHALRTTEYHDRDEQFYWIIEALGIRKPYIWEYSRLNLNNTVLSKRKLTWFVNEGLVDGWDDPRFPTVRGVLRRGMTVEGLKQFIAAQGSSRSVVNMEWDKIWAFNKKVIDPVAPRYVALLKKEVVPVNVPEAQEEMKEVARHPKNPDVGLKPVWYSPKVFIEGADAETFSEGEMVTFINWGNINITKIHKNADGKITSLDAKLNLENKDYKKTTKITWLAETTHALPIPAICVTYEHLITKPVLGKDEDFKQYVNKDSKHEELMLGDPCLKDLKKGDIIQLQRRGFFICDQPYEPVSPYSCKEAPCILIYIPDGHTKEMPTSGSKEKTKAEPLKKETSSAPKEGPVPAVSPCAASEESSVLYNRVAAQGDVVRELKAKKAAKEDVDAAVKQLLALKAEYKQKTGQEYKPGNPPSAAAQSASTKSLPSAGEDRSLYDKIAAQGEVVRKLKAEKAPKAKVTEAVECLLSLKAEYKEKTGKEYVPGQPPASQKSQPSPASKAEPAGPETTEAKALFDRVACQGEVVRKLKAEKASKDQVDPAVQELLQLKAQYKSLTGIEYKPVSATGSEDKDKKKKEKENKSEKQNKPQKQNDGPGKDSSKSQGGGLSSSGAGEGQGPKKQTRLGLEAKKEENLAEWYSQVITKSEMIEYYDVSGCYILRPWSYSIWESIKDFFDTEIKKLGVENCYFPIFVSQAALEKEKSHIEDFAPEVAWVTRSGKTELAEPIAIRPTSETVMYPAYAKWVQSHRDLPIRLNQWCNVVRWEFKHPQPFLRTREFLWQEGHSAFATFEEAADEVMQILELYARVYEELLAIPVVRGRKTEKEKFAGGDYTTTVEAFISASGRAIQGATSHHLGQNFSKMCEIVFEDPKTPGEKQFAFQCSWGLTTRTIGVMIMVHGDNMGLVLPPRVACVQVVVIPCGITNALSEEDREALMAKCNEYRKRLLGVNIRVRVDLRDNYSPGWKFNHWELKGVPVRLEVGPRDMKSCQFVAVRRDTGEKLTIAEKEAESKLQEILEDIQLNLFTRASEDLKTHMVVSNTLEDFQKVLDSGKIAQIPFCGEIDCEDWIKKTTARDQDVEPGAPSMGAKSLCIPFTPLCELQPGAMCVCGKNPAKFYTLFGRSY.

Residues 164 to 758 (GTKWDVSENK…SSVLYNRVAA (595 aa)) form a glutamate--tRNA ligase region. The 'HIGH' region motif lies at 204-214 (PEASGYLHIGH). The interval 296–315 (AEQMKAEREQRAESKHRQNS) is disordered. The segment covering 299–315 (MKAEREQRAESKHRQNS) has biased composition (basic and acidic residues). N6-acetyllysine; alternate is present on lysine 300. At lysine 300 the chain carries N6-malonyllysine; alternate. Threonine 355 carries the post-translational modification Phosphothreonine. The residue at position 417 (lysine 417) is an N6-acetyllysine. Residues 432 to 436 (VLSKR) carry the 'KMSKS' region motif. Phosphoserine is present on serine 434. Residues lysine 498, lysine 535, lysine 542, and lysine 637 each carry the N6-acetyllysine modification. The span at 708–728 (KEMPTSGSKEKTKAEPLKKET) shows a compositional bias: basic and acidic residues. The disordered stretch occupies residues 708–741 (KEMPTSGSKEKTKAEPLKKETSSAPKEGPVPAVS). Serine 746 is modified (phosphoserine). Positions 748 to 804 (ESSVLYNRVAAQGDVVRELKAKKAAKEDVDAAVKQLLALKAEYKQKTGQEYKPGNPP) constitute a WHEP-TRS 1 domain. The interval 759 to 955 (QGDVVRELKA…GIEYKPVSAT (197 aa)) is 3 X 57 AA approximate repeats. At lysine 787 the chain carries N6-acetyllysine. The tract at residues 794 to 823 (TGQEYKPGNPPSAAAQSASTKSLPSAGEDR) is disordered. Positions 807 to 816 (AAQSASTKSL) are enriched in polar residues. The WHEP-TRS 2 domain occupies 821–877 (EDRSLYDKIAAQGEVVRKLKAEKAPKAKVTEAVECLLSLKAEYKEKTGKEYVPGQPP). Position 860 is an N6-acetyllysine (lysine 860). 2 disordered regions span residues 868 to 903 (GKEY…AKAL) and 952 to 1015 (VSAT…RLGL). At tyrosine 871 the chain carries Phosphotyrosine. The span at 877-890 (PASQKSQPSPASKA) shows a compositional bias: low complexity. At serine 885 the chain carries Phosphoserine; by CDK5. Position 897 is a phosphothreonine (threonine 897). The region spanning 899-955 (EAKALFDRVACQGEVVRKLKAEKASKDQVDPAVQELLQLKAQYKSLTGIEYKPVSAT) is the WHEP-TRS 3 domain. Over residues 957-975 (SEDKDKKKKEKENKSEKQN) the composition is skewed to basic and acidic residues. Gly residues predominate over residues 992 to 1005 (QGGGLSSSGAGEGQ). Serine 997 carries the phosphoserine modification. Serine 998 bears the Phosphoserine; by RPS6KB1 mark. Serine 999 carries the phosphoserine modification. The interval 1006 to 1511 (GPKKQTRLGL…KFYTLFGRSY (506 aa)) is proline--tRNA ligase. Residues 1120 to 1122 (TSE) and arginine 1151 each bind L-proline. ATP is bound by residues arginine 1151, glutamate 1153, arginine 1162, threonine 1163, glutamine 1236, and threonine 1239. Arginine 1151 is modified (omega-N-methylarginine). Glutamine 1236 lines the Mg(2+) pocket. Histidine 1241 contacts L-proline. Residues threonine 1275 and arginine 1277 each contribute to the ATP site. Serine 1349 carries the post-translational modification Phosphoserine. 4 residues coordinate Zn(2+): cysteine 1447, cysteine 1452, cysteine 1494, and cysteine 1496. N6-acetyllysine is present on lysine 1502.

It in the N-terminal section; belongs to the class-I aminoacyl-tRNA synthetase family. Glutamate--tRNA ligase type 2 subfamily. The protein in the C-terminal section; belongs to the class-II aminoacyl-tRNA synthetase family. Homodimer. Part of the aminoacyl-tRNA synthetase multienzyme complex, also know as multisynthetase complex, that is composed of the tRNA ligases for Arg (RARS1), Asp (DARS1), Gln (QARS1), Ile (IARS1), Leu (LARS1), Lys (KARS1), Met (MARS1) the bifunctional ligase for Glu and Pro (EPRS1) and the auxiliary subunits AIMP1/p43, AIMP2/p38 and EEF1E1/p18. Forms a linear complex that contains MARS1, EEF1E1, EPRS1 and AIMP2 that is at the core of the multisubunit complex. Interacts with TARS3. Interacts with DUS2L. Component of the GAIT complex which is composed of EPRS1, RPL13A and GAPDH. Interacts (phosphorylated at Ser-998) with SLC27A1; mediates the translocation of SLC27A1 from the cytoplasm to the plasma membrane thereby increasing the uptake of long-chain fatty acids. Phosphorylated at Ser-998 by RPS6KB1; triggers EPRS1 release from the aminoacyl-tRNA synthetase multienzyme complex. In monocytes, the IFN-gamma-induced phosphorylation at Ser-998 releases EPRS1 from the aminoacyl-tRNA synthetase multienzyme complex, allowing its association with the GAIT complex. Phosphorylation at Ser-998 is specifically required for the RPL13A-mediated interaction of the GAIT complex with eIF4G. Phosphorylation at Ser-998 by RPS6KB1, is also induced by insulin through activation of the mTORC1 signaling pathway and promotes the interaction of EPRS1 with SLC27A1.

Its subcellular location is the cytoplasm. It is found in the cytosol. The protein localises to the membrane. The enzyme catalyses tRNA(Glu) + L-glutamate + ATP = L-glutamyl-tRNA(Glu) + AMP + diphosphate. The catalysed reaction is tRNA(Pro) + L-proline + ATP = L-prolyl-tRNA(Pro) + AMP + diphosphate. Its function is as follows. Multifunctional protein which primarily functions within the aminoacyl-tRNA synthetase multienzyme complex, also known as multisynthetase complex. Within the complex it catalyzes the attachment of both L-glutamate and L-proline to their cognate tRNAs in a two-step reaction where the amino acid is first activated by ATP to form a covalent intermediate with AMP. Subsequently, the activated amino acid is transferred to the acceptor end of the cognate tRNA to form L-glutamyl-tRNA(Glu) and L-prolyl-tRNA(Pro). Upon interferon-gamma stimulation, EPRS1 undergoes phosphorylation, causing its dissociation from the aminoacyl-tRNA synthetase multienzyme complex. It is recruited to form the GAIT complex, which binds to stem loop-containing GAIT elements found in the 3'-UTR of various inflammatory mRNAs, such as ceruloplasmin. The GAIT complex inhibits the translation of these mRNAs, allowing interferon-gamma to redirect the function of EPRS1 from protein synthesis to translation inhibition in specific cell contexts. Furthermore, it can function as a downstream effector in the mTORC1 signaling pathway, by promoting the translocation of SLC27A1 from the cytoplasm to the plasma membrane where it mediates the uptake of long-chain fatty acid by adipocytes. Thereby, EPRS1 also plays a role in fat metabolism and more indirectly influences lifespan. The sequence is that of Bifunctional glutamate/proline--tRNA ligase from Cricetulus griseus (Chinese hamster).